Consider the following 201-residue polypeptide: MQLGLDFNLVEDLVAGVDEVGRGPLCGPVVTAAVILDPSRPILGLNDSKKLSEARREALFEEIREKALAWCIARAEVEEIDRLNILHATMLAMQRAVEGLSVTPRLALIDGNRCPKLAVPCAPVVKGDSQVPAIAAASILAKVSRDREMVELDRVYPGYGMAGHKGYPTAVHLEALSRLGPTPIHRRSFAPVRELLDVSVQ.

Residues 12 to 201 (DLVAGVDEVG…VRELLDVSVQ (190 aa)) enclose the RNase H type-2 domain. The a divalent metal cation site is built by aspartate 18, glutamate 19, and aspartate 110.

Belongs to the RNase HII family. Requires Mn(2+) as cofactor. It depends on Mg(2+) as a cofactor.

Its subcellular location is the cytoplasm. The catalysed reaction is Endonucleolytic cleavage to 5'-phosphomonoester.. Endonuclease that specifically degrades the RNA of RNA-DNA hybrids. This chain is Ribonuclease HII, found in Pseudomonas aeruginosa (strain LESB58).